Here is a 912-residue protein sequence, read N- to C-terminus: MASRQISLALGFLAFLWAVLGAQNKTEEVQCRLMAKFNLSGYVDAKNHSLVIAGLFPIHSRIIPVDEAILEPVSPMCEGFNFRGFRWMKTMIHTIKEINERKDILPNHTLGYQIFDSCYTISKAMESSLVFLTGQEEFKPNFRNSTGSTLAALVGSGGSSLSVAASRILGLYYMPQVGYTSSCSILSDKFQFPSYLRVLPSDNLQSEAIVNLIKHFGWVWVGAIAADDDYGKYGVKTFKEKMESANLCVAFSETIPKVYSNEKMQKAVKAVKTSTAKVIVLYTSDIDLSLFVLEMIHHNITDRTWIATEAWITSALIAKPEYFPYFGGTIGFATPRSVIPGLKEFLYDVHPNKDPNDVLTIEFWQTAFNCTWPNSSVPYNVDHRVNMTGKEDRLYDMSDQLCTGEEKLEDLKNTYLDTSQLRITKQCKQAVYAIAHGLDHLSRCQEGQGPFGSNQQCAYIPTFDFWQLMYYMKEIKFKSHEDKWVILDDNGDLKNGHYDVLNWHLDDEGEISFVTVGRFNFRSTNFELVIPTNSTIFWNTESSRRPDSFCTQVCPPGTRKGIRQGQPICCFDCIPCADGYVSEKSGQRECDPCGEDDWSNAGKSKCVPKLVEFLAYGEALGFTLVILSIFGALVVLAVTVVYVIHRHTPLVKANDRELSFLIQMSLVITVLSSLLFIGKPCNWSCMARQITLALGFCLCLSSILGKTISLFFAYRISVSKTRLISMHPIFRKLIVLVCVVGEIGVCAAYLVLEPPRMFKNIEIQNVKIIFECNEGSVEFLCSIFGFDVLRALLCFLTTFVARQLPDNYYEGKCITFGMLVFFIVWISFVPAYLSTKGKFKVAVEIFAILASSYGLLGCLFLPKCFIILLRPKRNTDETVGGRVPTVDRSIQLTSASVSSELNSTTVSTVLDE.

A signal peptide spans 1–21 (MASRQISLALGFLAFLWAVLG). The Extracellular segment spans residues 22–623 (AQNKTEEVQC…LAYGEALGFT (602 aa)). N-linked (GlcNAc...) asparagine glycosylation is found at Asn-24, Asn-38, Asn-299, and Asn-386. Residues 624–644 (LVILSIFGALVVLAVTVVYVI) traverse the membrane as a helical segment. At 645 to 657 (HRHTPLVKANDRE) the chain is on the cytoplasmic side. The chain crosses the membrane as a helical span at residues 658-678 (LSFLIQMSLVITVLSSLLFIG). At 679-691 (KPCNWSCMARQIT) the chain is on the extracellular side. A helical membrane pass occupies residues 692–712 (LALGFCLCLSSILGKTISLFF). Topologically, residues 713 to 732 (AYRISVSKTRLISMHPIFRK) are cytoplasmic. Residues 733 to 753 (LIVLVCVVGEIGVCAAYLVLE) form a helical membrane-spanning segment. The Extracellular segment spans residues 754–778 (PPRMFKNIEIQNVKIIFECNEGSVE). A helical membrane pass occupies residues 779 to 799 (FLCSIFGFDVLRALLCFLTTF). Over 800-812 (VARQLPDNYYEGK) the chain is Cytoplasmic. A helical transmembrane segment spans residues 813 to 833 (CITFGMLVFFIVWISFVPAYL). Topologically, residues 834–840 (STKGKFK) are extracellular. Residues 841 to 861 (VAVEIFAILASSYGLLGCLFL) form a helical membrane-spanning segment. Over 862 to 912 (PKCFIILLRPKRNTDETVGGRVPTVDRSIQLTSASVSSELNSTTVSTVLDE) the chain is Cytoplasmic.

It belongs to the G-protein coupled receptor 3 family. Expressed at the sensory surface of the vomeronasal organ.

The protein localises to the cell membrane. Functionally, putative pheromone receptor. The protein is Vomeronasal type-2 receptor 1 (Vmn2r1) of Mus musculus (Mouse).